We begin with the raw amino-acid sequence, 732 residues long: Prolyl tripeptidyl peptidase (732 aa).

A signal peptide spans methionine 1 to alanine 24. Catalysis depends on charge relay system residues serine 603, aspartate 678, and histidine 710.

It belongs to the peptidase S9B family. In terms of processing, the N-terminus is blocked.

It catalyses the reaction Hydrolysis of Xaa-Xaa-Pro-|-Yaa- releasing the N-terminal tripeptide of a peptide with Pro as the third residue (position P1) and where Yaa is not proline.. Its activity is regulated as follows. Strongly inhibited by diisopropyl fluorophosphate and Pefabloc. Weakly inhibited by 3,4-dichloroisocumarin. Not inhibited by phenylmethylsulfonyl fluoride, leupeptin, antipain or prolinal. Activated by iodoacetamide. Serine proteinase. Releases tripeptides from the free amino terminus of proteins. Has a requirement for Pro in the P1 position, but is inactivated by Pro in the P1' position. This is Prolyl tripeptidyl peptidase from Porphyromonas gingivalis (strain ATCC BAA-308 / W83).